A 736-amino-acid polypeptide reads, in one-letter code: Orphan sodium- and chloride-dependent neurotransmitter transporter NTT5 (736 aa).

Residues 1–138 (MKTEAQPSTS…FAYLWLNSGG (138 aa)) are Cytoplasmic-facing. Helical transmembrane passes span 139–159 (CSFAAIYIFMLFLVGVPLLFL), 177–197 (IIAPWIGGVGYSSFMVCFILG), and 199–219 (YFNVVNSWIIFYMSQSFQFPV). The Extracellular portion of the chain corresponds to 220 to 263 (PWEKCPLTMNSSGFDPECERTTPSIYFWYQQALKASDRIEDGGS). A glycan (N-linked (GlcNAc...) asparagine) is linked at asparagine 229. The next 4 helical transmembrane spans lie at 264–284 (PVYSLVLPFFLCWCLVGAFMI), 290–310 (TGKVIYVLVLLPCFIIVGFFI), 338–358 (VWSLAGGQVLSNTGIGLGSVA), and 383–403 (LTLLVFTSFNFCVLGFWATVI). Topologically, residues 404–495 (THRCCERNAE…EAMSFLPPSV (92 aa)) are extracellular. A run of 5 helical transmembrane segments spans residues 496–516 (FWSFIFFLMLLAMGLSSAIGI), 534–554 (HTKLLIVGVFLLMFVCGLFFT), 568–588 (YWIVFPIIVVVVFETMAVSWA), 609–629 (IFGWLWPHLCPVVLLIIFVTM), and 659–679 (ALLLMITLFAIVILPIPAYFV). Over 680-736 (YCRIHRIPFRPKSGDGPMTASTSLPLSHQLTPSKEVQKEEILQVDETKYPSTCNVTS) the chain is Cytoplasmic.

It belongs to the sodium:neurotransmitter symporter (SNF) (TC 2.A.22) family. SLC6A16 subfamily. In terms of tissue distribution, highly expressed in peripheral tissues, particularly in testis, pancreas, and prostate.

It localises to the membrane. The polypeptide is Orphan sodium- and chloride-dependent neurotransmitter transporter NTT5 (SLC6A16) (Homo sapiens (Human)).